Here is a 1405-residue protein sequence, read N- to C-terminus: DNA-directed RNA polymerase subunit beta' (1405 aa).

Zn(2+) is bound by residues Cys-70, Cys-72, Cys-85, and Cys-88. The Mg(2+) site is built by Asp-460, Asp-462, and Asp-464. Positions 815, 890, 897, and 900 each coordinate Zn(2+). Residues 1375 to 1405 (GLTDSEMETLSGKPAGAEPVAALADAGADEE) are disordered.

The protein belongs to the RNA polymerase beta' chain family. As to quaternary structure, the RNAP catalytic core consists of 2 alpha, 1 beta, 1 beta' and 1 omega subunit. When a sigma factor is associated with the core the holoenzyme is formed, which can initiate transcription. Requires Mg(2+) as cofactor. It depends on Zn(2+) as a cofactor.

The enzyme catalyses RNA(n) + a ribonucleoside 5'-triphosphate = RNA(n+1) + diphosphate. DNA-dependent RNA polymerase catalyzes the transcription of DNA into RNA using the four ribonucleoside triphosphates as substrates. This chain is DNA-directed RNA polymerase subunit beta', found in Xanthomonas oryzae pv. oryzae (strain MAFF 311018).